Reading from the N-terminus, the 289-residue chain is Oxaloacetate decarboxylase (289 aa).

A substrate-binding site is contributed by Ser-50. Asp-88 is a Mg(2+) binding site. Positions 159 and 235 each coordinate substrate.

It belongs to the isocitrate lyase/PEP mutase superfamily. Oxaloacetate decarboxylase family. As to quaternary structure, homotetramer; dimer of dimers. Requires Mg(2+) as cofactor.

The enzyme catalyses oxaloacetate + H(+) = pyruvate + CO2. In terms of biological role, catalyzes the decarboxylation of oxaloacetate into pyruvate. Seems to play a role in maintaining cellular concentrations of bicarbonate and pyruvate. The chain is Oxaloacetate decarboxylase from Pseudomonas savastanoi pv. phaseolicola (strain 1448A / Race 6) (Pseudomonas syringae pv. phaseolicola (strain 1448A / Race 6)).